A 1442-amino-acid polypeptide reads, in one-letter code: Protein patched homolog 1 (1442 aa).

The tract at residues 1–45 (MASAADALEPESGSSTAGGGSHPVRAARSARGRRRRSGGTRRAAA) is disordered. At 1–101 (MASAADALEP…GCYIQKNCGK (101 aa)) the chain is on the cytoplasmic side. Basic residues predominate over residues 28–39 (RSARGRRRRSGG). Residues 102–122 (FLVVGLLYSAFAVGLRAANLE) form a helical membrane-spanning segment. The Extracellular segment spans residues 123–436 (TNVEELWVEV…LDDILKSFSD (314 aa)). 4 N-linked (GlcNAc...) asparagine glycosylation sites follow: Asn-141, Asn-312, Asn-349, and Asn-414. Residues 437–457 (VSVIRVASGYLLMLAYACLTM) form a helical membrane-spanning segment. In terms of domain architecture, SSD spans 438 to 598 (SVIRVASGYL…LLIFPAILSM (161 aa)). Topologically, residues 458 to 472 (LRWDCAKSQGAVGLA) are cytoplasmic. A helical transmembrane segment spans residues 473-493 (GVLLVALSVAAGLGLCSLIGI). Residues 494 to 501 (SFNAATTQ) lie on the Extracellular side of the membrane. Residues 502 to 522 (VLPFLALGVGVDDVFLLAHAF) traverse the membrane as a helical segment. Over 523-547 (SETGQNKRIPFEDRTGECLKRTGAS) the chain is Cytoplasmic. A helical transmembrane segment spans residues 548 to 568 (VALTSISNVTAFFMAALIPIP). At 569–577 (ALRAFSLQA) the chain is on the extracellular side. The chain crosses the membrane as a helical span at residues 578-598 (AVVVVFNFAMVLLIFPAILSM). Over 599–747 (DLYRREDRRL…HYAPFLLKPK (149 aa)) the chain is Cytoplasmic. A helical transmembrane segment spans residues 748–768 (AKVVVIFLFLGLLGLSLYGTT). The Extracellular segment spans residues 769–1026 (RVRDGLDLTD…WEQYIGLRHW (258 aa)). Asn-827, Asn-874, and Asn-999 each carry an N-linked (GlcNAc...) asparagine glycan. A helical membrane pass occupies residues 1027 to 1047 (LLLSISVVLACTFLVCALFLL). Residues 1048–1053 (NPWTAG) are Cytoplasmic-facing. A helical membrane pass occupies residues 1054–1074 (IIVVVLALMTVELFGMMGLIG). Residues 1075–1082 (IKLSAVPV) are Extracellular-facing. The chain crosses the membrane as a helical span at residues 1083-1101 (VILIASVGIGVEFTVHIAL). Topologically, residues 1102 to 1120 (AFLTAIGDKNRRAVLALEH) are cytoplasmic. Residues 1121 to 1141 (MFAPVLDGAVSTLLGVLMLAG) traverse the membrane as a helical segment. Residues 1142–1153 (SEFDFIVRYFFA) lie on the Extracellular side of the membrane. The chain crosses the membrane as a helical span at residues 1154-1174 (VLAILTILGVLNGLVLLPVLL). The Cytoplasmic segment spans residues 1175–1442 (SFFGPYPEVS…EERTAGKISE (268 aa)). Disordered regions lie at residues 1188 to 1231 (GRNR…TTVS) and 1266 to 1338 (STVV…LNHK). A compositionally biased stretch (low complexity) spans 1217 to 1226 (SDSSDSEYSS). The span at 1276 to 1293 (QSSPRLQSNPEAGTQQVW) shows a compositional bias: polar residues.

The protein belongs to the patched family. Glycosylation is necessary for SHH binding. Expression is seen in the embryonic neural tube, sclerotome, visceral mesoderm, and limb bud.

Its subcellular location is the membrane. Its function is as follows. Acts as a receptor for sonic hedgehog (SHH), indian hedgehog (IHH) and desert hedgehog (DHH). Associates with the smoothened protein (SMO) to transduce the hedgehog's proteins signal. The chain is Protein patched homolog 1 (PTCH1) from Gallus gallus (Chicken).